The following is a 188-amino-acid chain: SRP-independent targeting protein 3 (188 aa).

The chain crosses the membrane as a helical span at residues 27 to 47; it reads TIIMYIRILYCSSIGISWIIY. The residue at position 157 (Ser157) is a Phosphoserine. A disordered region spans residues 157-188; it reads SLFGGMGQTGPKTDKKSIEEAERAGNAGVKAE. The span at 168 to 179 shows a compositional bias: basic and acidic residues; sequence KTDKKSIEEAER.

The protein belongs to the PHO88 family. As to quaternary structure, interacts with ENV10/SND2. ENV10/SND2 and PHO88/SND3 form a complex with the translocon in the endoplasmic reticulum membrane.

The protein localises to the endoplasmic reticulum membrane. It is found in the mitochondrion. Functionally, functions in the SND pathway, a SRP (signal recognition particle) and GET (guided entry of tail-anchored proteins) independent pathway for targeting a broad range of substrate proteins to the endoplasmic reticulum. SND functions in parallel to GET in targeting proteins with downstream hydrophobic motifs. Involved in inorganic phosphate uptake. Also involved in telomere length regulation and maintenance. In Saccharomyces cerevisiae (strain ATCC 204508 / S288c) (Baker's yeast), this protein is SRP-independent targeting protein 3.